The sequence spans 277 residues: UPF0496 protein At3g48650 (277 aa).

Transmembrane regions (helical) follow at residues 124-144 (YIFF…LGAV) and 145-165 (SLVV…APLW).

This sequence belongs to the UPF0496 family.

The protein resides in the membrane. The sequence is that of UPF0496 protein At3g48650 from Arabidopsis thaliana (Mouse-ear cress).